The sequence spans 193 residues: ECF RNA polymerase sigma factor SigK (193 aa).

The segment at 35-101 is sigma-70 factor domain-2; sequence LYDRTRSRVY…RRAVDRVRSE (67 aa). Positions 59-62 match the Polymerase core binding motif; that stretch reads ETTQ. The interval 140-187 is sigma-70 factor domain-4; sequence MGSLSDLQREAIQLAYYEGLTYVQVSERLSANLATIKSRMRDGIRGLK. Positions 161-180 form a DNA-binding region, H-T-H motif; it reads YVQVSERLSANLATIKSRMR.

It belongs to the sigma-70 factor family. ECF subfamily. Interacts transiently with the RNA polymerase catalytic core formed by RpoA, RpoB, RpoC and RpoZ (2 alpha, 1 beta, 1 beta' and 1 omega subunit) to form the RNA polymerase holoenzyme that can initiate transcription. Interacts (via sigma-70 factor domain 4) with anti-sigma-K factor RskA.

Sigma factors are initiation factors that promote the attachment of RNA polymerase to specific initiation sites and are then released. Extracytoplasmic function (ECF) sigma factors are held in an inactive form by an anti-sigma factor until released by regulated intramembrane proteolysis. The chain is ECF RNA polymerase sigma factor SigK (sigK) from Mycobacterium sp. (strain JLS).